The sequence spans 463 residues: Glutamyl-tRNA reductase (463 aa).

Substrate-binding positions include 49–52, Ser-109, 114–116, and Gln-120; these read TCNR and EQQ. Residue Cys-50 is the Nucleophile of the active site. 196–201 contributes to the NADP(+) binding site; that stretch reads GAGAMS.

Belongs to the glutamyl-tRNA reductase family. Homodimer.

The enzyme catalyses (S)-4-amino-5-oxopentanoate + tRNA(Glu) + NADP(+) = L-glutamyl-tRNA(Glu) + NADPH + H(+). It participates in porphyrin-containing compound metabolism; protoporphyrin-IX biosynthesis; 5-aminolevulinate from L-glutamyl-tRNA(Glu): step 1/2. Functionally, catalyzes the NADPH-dependent reduction of glutamyl-tRNA(Glu) to glutamate 1-semialdehyde (GSA). This chain is Glutamyl-tRNA reductase, found in Corynebacterium glutamicum (strain ATCC 13032 / DSM 20300 / JCM 1318 / BCRC 11384 / CCUG 27702 / LMG 3730 / NBRC 12168 / NCIMB 10025 / NRRL B-2784 / 534).